We begin with the raw amino-acid sequence, 216 residues long: 3-keto-L-gulonate-6-phosphate decarboxylase UlaD (216 aa).

Residue D11 participates in substrate binding. Mg(2+) is bound by residues E33 and D62. R192 is a binding site for substrate.

The protein belongs to the HPS/KGPDC family. KGPDC subfamily. Homodimer. Requires Mg(2+) as cofactor.

The catalysed reaction is 3-dehydro-L-gulonate 6-phosphate + H(+) = L-xylulose 5-phosphate + CO2. It participates in cofactor degradation; L-ascorbate degradation; D-xylulose 5-phosphate from L-ascorbate: step 2/4. Catalyzes the decarboxylation of 3-keto-L-gulonate-6-P into L-xylulose-5-P. Is involved in the anaerobic L-ascorbate utilization. The chain is 3-keto-L-gulonate-6-phosphate decarboxylase UlaD from Salmonella choleraesuis (strain SC-B67).